Consider the following 449-residue polypeptide: UDP-glycosyltransferase 76E6 (449 aa).

UDP-alpha-D-glucose is bound by residues serine 274, 333–335, 350–358, and 372–375; these read APQ, HCGWNSTLE, and HGEQ.

Belongs to the UDP-glycosyltransferase family.

This chain is UDP-glycosyltransferase 76E6 (UGT76E6), found in Arabidopsis thaliana (Mouse-ear cress).